The sequence spans 373 residues: 3 beta-hydroxysteroid dehydrogenase/Delta 5--&gt;4-isomerase (373 aa).

The active-site Proton acceptor is the Tyr-155. An NAD(+)-binding site is contributed by Lys-159. The helical transmembrane segment at 288-308 threads the bilayer; it reads ISLQYWLAFLLEIVSFLLSPI.

It belongs to the 3-beta-HSD family.

Its subcellular location is the endoplasmic reticulum membrane. It is found in the mitochondrion membrane. The enzyme catalyses a 3beta-hydroxy-Delta(5)-steroid + NAD(+) = a 3-oxo-Delta(5)-steroid + NADH + H(+). It carries out the reaction a 3-oxo-Delta(5)-steroid = a 3-oxo-Delta(4)-steroid. Its pathway is lipid metabolism; steroid biosynthesis. 3-beta-HSD is a bifunctional enzyme, that catalyzes the oxidative conversion of Delta(5)-ene-3-beta-hydroxy steroid, and the oxidative conversion of ketosteroids. The 3-beta-HSD enzymatic system plays a crucial role in the biosynthesis of all classes of hormonal steroids. The sequence is that of 3 beta-hydroxysteroid dehydrogenase/Delta 5--&gt;4-isomerase (HSD3B) from Bos taurus (Bovine).